We begin with the raw amino-acid sequence, 134 residues long: Thioredoxin-like protein Clot (134 aa).

The Thioredoxin domain maps to 1 to 134 (MTLKKVDANP…LILPLLAPST (134 aa)). Residues C48 and C51 each act as nucleophile in the active site. Residues C48 and C51 are joined by a disulfide bond.

Belongs to the thioredoxin family.

Probable thiol-disulfide oxidoreductase that may participate in various redox reactions. This Arabidopsis thaliana (Mouse-ear cress) protein is Thioredoxin-like protein Clot.